Consider the following 441-residue polypeptide: ATP-dependent protease ATPase subunit HslU (441 aa).

Residues I18, 60 to 65, D254, E319, and R391 each bind ATP; that span reads GVGKTE.

This sequence belongs to the ClpX chaperone family. HslU subfamily. As to quaternary structure, a double ring-shaped homohexamer of HslV is capped on each side by a ring-shaped HslU homohexamer. The assembly of the HslU/HslV complex is dependent on binding of ATP.

The protein resides in the cytoplasm. In terms of biological role, ATPase subunit of a proteasome-like degradation complex; this subunit has chaperone activity. The binding of ATP and its subsequent hydrolysis by HslU are essential for unfolding of protein substrates subsequently hydrolyzed by HslV. HslU recognizes the N-terminal part of its protein substrates and unfolds these before they are guided to HslV for hydrolysis. The protein is ATP-dependent protease ATPase subunit HslU of Shewanella pealeana (strain ATCC 700345 / ANG-SQ1).